The following is a 177-amino-acid chain: MKQSLTLVFLVAIGYATAHTTSHDYSGGYGGGCYGSDCDSGYGDSGYGGGCTGGDCGGGYGGGYGGGCSGGDCGNYGGGYGGDCNGGDCGNYGGGYGGGNGGGCSGGNCGGGFDEAFPAPYGGDYGNGGNGFGKGGSKGNNYGKGYGGGSGKGKGGGKGGKGGKGGTYKPSHYGGGY.

The N-terminal stretch at 1-18 is a signal peptide; it reads MKQSLTLVFLVAIGYATA. A run of 5 repeats spans residues 25–41, 42–59, 60–75, 76–91, and 92–112. The segment at 25-112 is 5 X approximate tandem repeats; sequence YSGGYGGGCY…GCSGGNCGGG (88 aa). Gly residues predominate over residues 149–166; that stretch reads GSGKGKGGGKGGKGGKGG. The segment at 149–177 is disordered; sequence GSGKGKGGGKGGKGGKGGTYKPSHYGGGY.

This is Eggshell protein from Schistosoma mansoni (Blood fluke).